The following is a 698-amino-acid chain: MNPSEMQRKAPPRRRRHRNRAPLTHKMNKMVTSEEQMKLPSTKKAEPPTWAQLKKLTQLATKYLENTKVTQTPESMLLAALMIVSMVVSLPMPAGAAAANYTNWAYVPFPPLIRAVTWMDNPIEVYVNDSVWVPGPIDDRCPAKPEEEGMMINISIGYRYPICLGRAPGCLMPAVQNWLVEVPIVSPICRFTYHMVSGMSLRPRVNYLQDFSYQRSLKFRPKGKPCPKEIPKESKNTEVLVWEECVANSAVILQNNEFGTIIDWTPQGQFYHNCSGQTQSCPSAQVSPAVDSDLTESLDKHKHKKLQSFYPWEWGEKGISTPRPKIISPVSGPEHPELWRLTVASHHIRIWSGNQTLETRDRKPFYTVDLNSSLTLPLQSCVKPPYMLVVGNIVIKPDSQTITCENCRLLTCIDSTFNWQHRILLVRAREGVWIPVSMDRPWEASPSIHILTEVLKGVLNRSKRFIFTLIAVIMGLIAVTATAAVAGVALHSSVQSVNFVNDGQKNSTRLWNSQSSIDQKLANQINDLRQTVIWMGDRLMSLEHRFQLQCDWNTSDFCITPQIYNESEHHWDMVRRHLQGREDNLTLDISKLKEQIFEASKAHLNLVPGTEAIAGVADGLANLNPVTWVKTIGSTTIINLILILVCLFCLLLVCRCTQQLRRDSDHRERAMMTMAVLSKRKGGNVGKSKRDQIVTVSV.

Positions 1-47 are disordered; sequence MNPSEMQRKAPPRRRRHRNRAPLTHKMNKMVTSEEQMKLPSTKKAEP. The signal sequence occupies residues 1-89; sequence MNPSEMQRKA…ALMIVSMVVS (89 aa). Residues 10 to 20 show a composition bias toward basic residues; the sequence is APPRRRRHRNR. Residues 90–631 are Extracellular-facing; it reads LPMPAGAAAA…NLNPVTWVKT (542 aa). N-linked (GlcNAc...) asparagine glycans are attached at residues N100, N128, N153, N273, N354, N371, and N460. A fusion peptide region spans residues 465 to 485; the sequence is FIFTLIAVIMGLIAVTATAAV. Residues N506, N553, N565, and N584 are each glycosylated (N-linked (GlcNAc...) asparagine). Residues 632-652 form a helical membrane-spanning segment; that stretch reads IGSTTIINLILILVCLFCLLL. At 653 to 698 the chain is on the cytoplasmic side; it reads VCRCTQQLRRDSDHRERAMMTMAVLSKRKGGNVGKSKRDQIVTVSV.

The protein belongs to the beta type-B retroviral envelope protein family. HERV class-II K(HML-2) env subfamily. The surface (SU) and transmembrane (TM) proteins form a heterodimer. SU and TM are attached by noncovalent interactions or by a labile interchain disulfide bond. Post-translationally, specific enzymatic cleavages in vivo yield the mature SU and TM proteins.

Its subcellular location is the cell membrane. The protein resides in the virion. Functionally, retroviral envelope proteins mediate receptor recognition and membrane fusion during early infection. Endogenous envelope proteins may have kept, lost or modified their original function during evolution. This endogenous envelope protein has lost its original fusogenic properties. Its function is as follows. SU mediates receptor recognition. TM anchors the envelope heterodimer to the viral membrane through one transmembrane domain. The other hydrophobic domain, called fusion peptide, mediates fusion of the viral membrane with the target cell membrane. The sequence is that of Endogenous retrovirus group K member 9 Env polyprotein (ERVK-9) from Homo sapiens (Human).